A 367-amino-acid chain; its full sequence is Probable outer membrane usher protein LpfC (367 aa).

The signal sequence occupies residues 1–30 (MSRKTVSRTFSSFSISVVAVAVASTFSAHA).

Belongs to the fimbrial export usher family.

It localises to the cell outer membrane. Functionally, part of the lpfABCC'DE fimbrial operon. LP fimbriae may participate in the interaction with eukaryotic cells by assisting in microcolony formation. Could be involved in the export and assembly of the fimbrial subunits across the outer membrane. The sequence is that of Probable outer membrane usher protein LpfC (lpfC) from Escherichia coli O157:H7.